Consider the following 601-residue polypeptide: DNA topoisomerase I, mitochondrial (601 aa).

The transit peptide at 1 to 50 (MRVVRLLRLRAALTLLGEVPRRPASRGVPGSRRTQKGSGARWEKEKHEDG) directs the protein to the mitochondrion. The tract at residues 22–48 (RPASRGVPGSRRTQKGSGARWEKEKHE) is disordered. Interaction with DNA regions lie at residues 261-262 (KY), 324-329 (RAGNEK), and 421-423 (TAK). Positions 268–601 (CSKLKGETAW…LAMAGEDFEF (334 aa)) constitute a Topo IB-type catalytic domain. Catalysis depends on tyrosine 559, which acts as the O-(3'-phospho-DNA)-tyrosine intermediate.

Belongs to the type IB topoisomerase family. It depends on Ca(2+) as a cofactor. The cofactor is Mg(2+). As to expression, ubiquitous; highest in skeletal muscle, heart, brain and fetal liver.

It localises to the mitochondrion. The catalysed reaction is ATP-independent breakage of single-stranded DNA, followed by passage and rejoining.. Releases the supercoiling and torsional tension of DNA introduced during duplication of mitochondrial DNA by transiently cleaving and rejoining one strand of the DNA duplex. Introduces a single-strand break via transesterification at a target site in duplex DNA. The scissile phosphodiester is attacked by the catalytic tyrosine of the enzyme, resulting in the formation of a DNA-(3'-phosphotyrosyl)-enzyme intermediate and the expulsion of a 5'-OH DNA strand. The free DNA strand then rotates around the intact phosphodiester bond on the opposing strand, thus removing DNA supercoils. Finally, in the religation step, the DNA 5'-OH attacks the covalent intermediate to expel the active-site tyrosine and restore the DNA phosphodiester backbone. The chain is DNA topoisomerase I, mitochondrial (TOP1MT) from Homo sapiens (Human).